A 245-amino-acid polypeptide reads, in one-letter code: Ribonuclease 3 (245 aa).

The 130-residue stretch at 19 to 148 (FKVFQEKIGI…FIGALYLDQG (130 aa)) folds into the RNase III domain. Position 61 (glutamate 61) interacts with Mg(2+). Residue aspartate 65 is part of the active site. Mg(2+)-binding residues include aspartate 134 and glutamate 137. Residue glutamate 137 is part of the active site. The region spanning 174–243 (DYKSQLQELI…AAEALKKLKE (70 aa)) is the DRBM domain.

The protein belongs to the ribonuclease III family. In terms of assembly, homodimer. Requires Mg(2+) as cofactor.

It localises to the cytoplasm. The catalysed reaction is Endonucleolytic cleavage to 5'-phosphomonoester.. Functionally, digests double-stranded RNA. Involved in the processing of primary rRNA transcript to yield the immediate precursors to the large and small rRNAs (23S and 16S). Processes some mRNAs, and tRNAs when they are encoded in the rRNA operon. Processes pre-crRNA and tracrRNA of type II CRISPR loci if present in the organism. In Bacillus cereus (strain AH187), this protein is Ribonuclease 3.